A 35-amino-acid chain; its full sequence is Phospholipase A2 bitanarin (35 aa).

The protein belongs to the phospholipase A2 family. Group II subfamily. As to quaternary structure, monomer. Ca(2+) serves as cofactor. Contains 14 disulfide bonds. As to expression, expressed by the venom gland.

Its subcellular location is the secreted. It carries out the reaction a 1,2-diacyl-sn-glycero-3-phosphocholine + H2O = a 1-acyl-sn-glycero-3-phosphocholine + a fatty acid + H(+). Snake venom phospholipase A2 (PLA2) that is the first competitive blocker of nicotinic acetylcholine receptors (nAChRs). Competes with alpha-bungarotoxin for binding to nAChRs and acetylcholine binding proteins (AChBPs) and blocks acetylcholine-elicited current. PLA2 catalyzes the calcium-dependent hydrolysis of the 2-acyl groups in 3-sn-phosphoglycerides. The protein is Phospholipase A2 bitanarin of Bitis arietans (African puff adder).